We begin with the raw amino-acid sequence, 417 residues long: Probable tubulin polyglutamylase ttll-9 (417 aa).

A TTL domain is found at 23 to 372 (QRKKKILFKC…EKKLIGNENE (350 aa)). ATP contacts are provided by residues 188–191 (QCYV), Lys201, and Asp203.

This sequence belongs to the tubulin--tyrosine ligase family. As to expression, expressed in head sensory neurons.

Its function is as follows. Polyglutamylase that forms polyglutamate side chains on tubulin. Acts when complexed with other proteins. Appears to be dispensable for polar spindle formation in dividing embryonic cells, for cilia-dependent osmotic avoidance and for male mating behavior. Probably by regulating microtubule stability via the glutamylation of tubulin, regulates PLM axon developmental growth. This is Probable tubulin polyglutamylase ttll-9 from Caenorhabditis elegans.